Here is a 299-residue protein sequence, read N- to C-terminus: Delta-9 desaturase-like 1 protein (299 aa).

2 consecutive transmembrane segments (helical) span residues 31-51 and 55-75; these read IDIARASAVGAVHLLCLLAPF and WEALRFGVILAIVTSLSITFS. Positions 77-82 match the Histidine box-1 motif; it reads HRNLTH. A Histidine box-2 motif is present at residues 114–118; sequence HRFHH. 2 helical membrane passes run 174–194 and 198–218; these read IGLHILTFWTLVYLWGGLPYL and VGVGGTIGYNGTWLINSACHI. The short motif at 246-250 is the Histidine box-3 element; it reads HNNHH. A helical membrane pass occupies residues 262 to 282; that stretch reads WYQVDLTWYLICFFQALGLAT.

It belongs to the fatty acid desaturase type 1 family. Fe cation serves as cofactor.

The protein localises to the endoplasmic reticulum membrane. It functions in the pathway lipid metabolism; polyunsaturated fatty acid biosynthesis. This chain is Delta-9 desaturase-like 1 protein, found in Arabidopsis thaliana (Mouse-ear cress).